A 301-amino-acid chain; its full sequence is GTPase Era (301 aa).

Residues 6 to 173 form the Era-type G domain; sequence KSGFVAIVGR…LEQTNANLEI (168 aa). The tract at residues 14–21 is G1; sequence GRPNVGKS. 14–21 is a binding site for GTP; the sequence is GRPNVGKS. Positions 40 to 44 are G2; sequence QTTRN. Positions 61 to 64 are G3; the sequence is DTPG. GTP is bound by residues 61–65 and 123–126; these read DTPGI and NKID. The G4 stretch occupies residues 123 to 126; it reads NKID. The segment at 152–154 is G5; that stretch reads ISA. Positions 204–282 constitute a KH type-2 domain; the sequence is TREEVPHSVA…FLEIWVKVQK (79 aa).

The protein belongs to the TRAFAC class TrmE-Era-EngA-EngB-Septin-like GTPase superfamily. Era GTPase family. In terms of assembly, monomer.

It localises to the cytoplasm. It is found in the cell membrane. Its function is as follows. An essential GTPase that binds both GDP and GTP, with rapid nucleotide exchange. Plays a role in 16S rRNA processing and 30S ribosomal subunit biogenesis and possibly also in cell cycle regulation and energy metabolism. The chain is GTPase Era from Listeria innocua serovar 6a (strain ATCC BAA-680 / CLIP 11262).